The primary structure comprises 329 residues: Diaminopimelate epimerase (329 aa).

Positions 14 and 73 each coordinate substrate. Cysteine 82 serves as the catalytic Proton donor. Residues 83 to 84 (GN), asparagine 170, asparagine 206, and 224 to 225 (ER) each bind substrate. Catalysis depends on cysteine 233, which acts as the Proton acceptor. Residue 234 to 235 (GT) participates in substrate binding.

Belongs to the diaminopimelate epimerase family. In terms of assembly, homodimer.

It localises to the cytoplasm. It carries out the reaction (2S,6S)-2,6-diaminopimelate = meso-2,6-diaminopimelate. The protein operates within amino-acid biosynthesis; L-lysine biosynthesis via DAP pathway; DL-2,6-diaminopimelate from LL-2,6-diaminopimelate: step 1/1. Functionally, catalyzes the stereoinversion of LL-2,6-diaminopimelate (L,L-DAP) to meso-diaminopimelate (meso-DAP), a precursor of L-lysine and an essential component of the bacterial peptidoglycan. This chain is Diaminopimelate epimerase, found in Listeria monocytogenes serotype 4b (strain F2365).